A 97-amino-acid chain; its full sequence is Large ribosomal subunit protein bL28 (97 aa).

It belongs to the bacterial ribosomal protein bL28 family.

The chain is Large ribosomal subunit protein bL28 from Bartonella quintana (strain Toulouse) (Rochalimaea quintana).